Reading from the N-terminus, the 69-residue chain is Small archaeal modifier protein 2 (69 aa).

K55 participates in a covalent cross-link: Glycyl lysine isopeptide (Lys-Gly) (interchain with G-Cter in SAMP2). 1-thioglycine; alternate is present on G69. Position 69 is a glycyl adenylate; alternate (G69). G69 participates in a covalent cross-link: Glycyl lysine isopeptide (Gly-Lys) (interchain with K-? in acceptor proteins); alternate.

In terms of processing, the C-terminal glycine is likely acyl-adenylated (-COAMP) by UbaA, and also probably thiocarboxylated (-COSH) to function in sulfur transfer.

Functionally, functions as a protein modifier covalently attached to lysine residues of substrate proteins, as well as a sulfur carrier in tRNA thiolation. The protein modification process is termed sampylation and involves the formation of an isopeptide bond between the SAMP2 C-terminal glycine carboxylate and the epsilon-amino group of lysine residues on target proteins. Is able to form polymeric chains with itself likely at Lys-55, similar to ubiquitin and other ubiquitin-like proteins. May serve as a proteolytic signal in the cell to target proteins for degradation by proteasomes. The polypeptide is Small archaeal modifier protein 2 (Pyrococcus furiosus (strain ATCC 43587 / DSM 3638 / JCM 8422 / Vc1)).